The chain runs to 317 residues: Uridine phosphorylase 2 (317 aa).

Phosphate-binding positions include G66, R100, and 144–147; that span reads RIGT. An intrachain disulfide couples C95 to C102. Uridine-binding positions include 148–149 and 223–225; these read SG and QGR.

The protein belongs to the PNP/UDP phosphorylase family. Homodimer. As to expression, predominantly expressed in kidney.

The enzyme catalyses uridine + phosphate = alpha-D-ribose 1-phosphate + uracil. It catalyses the reaction 2'-deoxyuridine + phosphate = 2-deoxy-alpha-D-ribose 1-phosphate + uracil. It participates in pyrimidine metabolism; UMP biosynthesis via salvage pathway; uracil from uridine (phosphorylase route): step 1/1. Its activity is regulated as follows. A conditional disulfide bridge can form within the protein that dislocates a critical phosphate-coordinating arginine Arg-100 away from the active site, disabling the enzyme. Its function is as follows. Catalyzes the reversible phosphorylytic cleavage of uridine to uracil and ribose-1-phosphate which can then be utilized as carbon and energy sources or in the rescue of pyrimidine bases for nucleotide synthesis. Shows broad substrate specificity and can also accept deoxyuridine and other analogous compounds. The chain is Uridine phosphorylase 2 from Homo sapiens (Human).